Here is a 325-residue protein sequence, read N- to C-terminus: Beta-ketoacyl-[acyl-carrier-protein] synthase III (325 aa).

Catalysis depends on residues Cys119 and His252. Positions Gln253–Arg257 are ACP-binding. Residue Asn282 is part of the active site.

This sequence belongs to the thiolase-like superfamily. FabH family. As to quaternary structure, homodimer.

It localises to the cytoplasm. The enzyme catalyses malonyl-[ACP] + acetyl-CoA + H(+) = 3-oxobutanoyl-[ACP] + CO2 + CoA. It participates in lipid metabolism; fatty acid biosynthesis. Functionally, catalyzes the condensation reaction of fatty acid synthesis by the addition to an acyl acceptor of two carbons from malonyl-ACP. Catalyzes the first condensation reaction which initiates fatty acid synthesis and may therefore play a role in governing the total rate of fatty acid production. Possesses both acetoacetyl-ACP synthase and acetyl transacylase activities. Its substrate specificity determines the biosynthesis of branched-chain and/or straight-chain of fatty acids. The chain is Beta-ketoacyl-[acyl-carrier-protein] synthase III from Paracidovorax citrulli (strain AAC00-1) (Acidovorax citrulli).